Consider the following 290-residue polypeptide: Probable protein phosphatase 2C 62 (290 aa).

The PPM-type phosphatase domain maps to 38-288 (KHGYHLVKGK…DDISCIVVKF (251 aa)). Residues aspartate 75, glycine 76, aspartate 240, and aspartate 279 each coordinate Mn(2+).

It belongs to the PP2C family. Requires Mg(2+) as cofactor. The cofactor is Mn(2+).

The enzyme catalyses O-phospho-L-seryl-[protein] + H2O = L-seryl-[protein] + phosphate. The catalysed reaction is O-phospho-L-threonyl-[protein] + H2O = L-threonyl-[protein] + phosphate. This chain is Probable protein phosphatase 2C 62, found in Oryza sativa subsp. japonica (Rice).